The primary structure comprises 90 residues: uncharacterized protein (90 aa).

The segment at 62 to 90 is disordered; sequence RQLKKKQAYKPDPEASFSWSANTSTRGRR. Over residues 78–90 the composition is skewed to polar residues; it reads FSWSANTSTRGRR.

This is an uncharacterized protein from Escherichia coli (strain K12).